Consider the following 157-residue polypeptide: Protein snakeskin (157 aa).

Topologically, residues 2–6 are cytoplasmic; the sequence is VSVQT. Residues 7 to 27 traverse the membrane as a helical segment; it reads IATIVVKTFKIVLNIIILVLY. The Extracellular portion of the chain corresponds to 28 to 53; sequence RTGYNGEFLGVGGTWNLNEEKNPDAE. The helical transmembrane segment at 54–74 threads the bilayer; it reads IVASGVIVGYLIYTLVQIVTF. The Cytoplasmic segment spans residues 75–87; it reads LFGTTEHKRALSE. The helical transmembrane segment at 88 to 108 threads the bilayer; sequence IVMNFVGVFLWIAVGAVALHY. Topologically, residues 109-130 are extracellular; the sequence is WGGYQGEHQFQFVFAEKQVGLA. The chain crosses the membrane as a helical span at residues 131–151; it reads VGALCVINGAIYLLDTALSVI. The Cytoplasmic segment spans residues 152–157; sequence HFTKEM.

Expressed in midgut epithelium (at protein level).

It is found in the apicolateral cell membrane. It localises to the cell junction. The protein resides in the septate junction. Functionally, required for assembly of smooth septate junctions (sSJs). May be important for barrier function of the midgut epithelium. The polypeptide is Protein snakeskin (Bombyx mori (Silk moth)).